Reading from the N-terminus, the 1160-residue chain is DNA polymerase III subunit alpha (1160 aa).

The protein belongs to the DNA polymerase type-C family. DnaE subfamily. As to quaternary structure, the DNA polymerase holoenzyme is a complex that contains 10 different types of subunits. These subunits are organized into 3 functionally essential subassemblies: the pol III core, the beta sliding clamp processivity factor and the clamp-loading complex. The pol III core (subunits alpha,epsilon and theta) contains the polymerase and the 3'-5' exonuclease proofreading activities. The polymerase is tethered to the template via the sliding clamp processivity factor. The clamp-loading complex assembles the beta processivity factor onto the primer template and plays a central role in the organization and communication at the replication fork. This complex contains delta, delta', psi and chi, and copies of either or both of two different DnaX proteins, gamma and tau. The composition of the holoenzyme is, therefore: (alpha,epsilon,theta)[2]-(gamma/tau)[3]-delta,delta', psi,chi-beta[4].

Its subcellular location is the cytoplasm. The catalysed reaction is DNA(n) + a 2'-deoxyribonucleoside 5'-triphosphate = DNA(n+1) + diphosphate. DNA polymerase III is a complex, multichain enzyme responsible for most of the replicative synthesis in bacteria. This DNA polymerase also exhibits 3' to 5' exonuclease activity. The alpha chain is the DNA polymerase. The polypeptide is DNA polymerase III subunit alpha (dnaE) (Escherichia coli O157:H7).